A 595-amino-acid chain; its full sequence is Probable translation initiation factor IF-2 (595 aa).

A tr-type G domain is found at Leu11 to Leu225. Residues Gly20–Thr27 are G1. Gly20–Thr27 lines the GTP pocket. Residues Gly45 to His49 are G2. The interval Asp81–Gly84 is G3. GTP-binding positions include Asp81–His85 and Asn135–Asp138. The tract at residues Asn135 to Asp138 is G4. The tract at residues Ser203–Leu205 is G5.

Belongs to the TRAFAC class translation factor GTPase superfamily. Classic translation factor GTPase family. IF-2 subfamily.

Function in general translation initiation by promoting the binding of the formylmethionine-tRNA to ribosomes. Seems to function along with eIF-2. The protein is Probable translation initiation factor IF-2 (infB) of Archaeoglobus fulgidus (strain ATCC 49558 / DSM 4304 / JCM 9628 / NBRC 100126 / VC-16).